A 232-amino-acid chain; its full sequence is Sugar fermentation stimulation protein homolog (232 aa).

The protein belongs to the SfsA family.

The chain is Sugar fermentation stimulation protein homolog from Geobacter metallireducens (strain ATCC 53774 / DSM 7210 / GS-15).